Consider the following 105-residue polypeptide: Saimiri transformation-associated protein (105 aa).

The Cytoplasmic portion of the chain corresponds to Met1 to Gly75. The segment at Met1 to Gly75 is disordered. The region spanning Gly15–Pro74 is the Collagen-like domain. Positions Gln20 to Ser71 are enriched in pro residues. Residues Leu76 to Ile96 form a helical membrane-spanning segment. Residues Leu97–Asn105 are Extracellular-facing.

In terms of assembly, binds to host RAS and TRAF2.

The protein localises to the host membrane. Acts synergistically with Tip to stimulate NF-kappa-B activity and interleukin-2 gene expression by binding to host TRAF proteins. Activation of NF-kappa-B protects lymphocytes from apoptosis, thereby facilitating viral induced cell transformation. The protein is Saimiri transformation-associated protein of Saimiriine herpesvirus 2 (strain 484-77) (SaHV-2).